The primary structure comprises 371 residues: Cytochrome b (371 aa).

4 helical membrane-spanning segments follow: residues 25–45 (FGSMLLTCLALQVLTGFFLAV), 69–90 (WMMQNLHAIGASMFFICIYIHI), 105–125 (WMSGITLLITLMATAFFGYVL), and 170–190 (FFALHFILPFAIISLSSLHVI). Heme b contacts are provided by H75 and H89. 2 residues coordinate heme b: H174 and H188. A ubiquinone is bound at residue H193. A run of 4 helical transmembrane segments spans residues 218-238 (YKDFLLLTLMVLSLFIIVSFF), 280-300 (LGGALALVMSIMILFTIPFTH), 312-332 (LYQLMFWTLVSTFITITWAAT), and 339-358 (FITISQVTSTLYFTFFISIP).

Belongs to the cytochrome b family. In terms of assembly, the cytochrome bc1 complex contains 3 respiratory subunits (MT-CYB, CYC1 and UQCRFS1), 2 core proteins (UQCRC1 and UQCRC2) and probably 6 low-molecular weight proteins. Heme b serves as cofactor.

Its subcellular location is the mitochondrion inner membrane. Functionally, component of the ubiquinol-cytochrome c reductase complex (complex III or cytochrome b-c1 complex) that is part of the mitochondrial respiratory chain. The b-c1 complex mediates electron transfer from ubiquinol to cytochrome c. Contributes to the generation of a proton gradient across the mitochondrial membrane that is then used for ATP synthesis. The sequence is that of Cytochrome b (MT-CYB) from Malayopython reticulatus (Reticulate python).